Reading from the N-terminus, the 535-residue chain is BAR/IMD domain-containing adapter protein 2 (535 aa).

An IMD domain is found at 1 to 250 (MSLSRSEEMH…VQLMQQMANS (250 aa)). Residues 88-153 (NQLEETLKSF…LRKKSQGSKN (66 aa)) adopt a coiled-coil conformation. Ser-262, Ser-324, Ser-326, and Ser-337 each carry phosphoserine. A disordered region spans residues 299-370 (VMNGVAGPDS…TLPRSSSMAA (72 aa)). A compositionally biased stretch (low complexity) spans 321-335 (QPKSLSPPQSQSKLS). Thr-341 bears the Phosphothreonine mark. Position 347 is a phosphoserine (Ser-347). Positions 349-368 (TPKNSYATTENKTLPRSSSM) are enriched in polar residues. Residue Thr-361 is modified to Phosphothreonine. Ser-367, Ser-385, Ser-396, and Ser-455 each carry phosphoserine. Residues 375-438 (NGRMRVKAIF…PFSYTRVLDS (64 aa)) form the SH3 domain. The segment at 445 to 477 (HMSLQQGKSSSTGNLLDKDDLALPPPDYGTSSR) is disordered. A compositionally biased stretch (polar residues) spans 447 to 458 (SLQQGKSSSTGN).

In terms of assembly, homodimer. Interacts with CDC42 and RAC1 that have been activated by GTP binding. Binds DIAPH1. Interacts with ATN1, ADGRB1, SHANK1, SHANK2, SHANK3, TIAM1, WASF1 and WASF2. Interacts with ENAH after recruitment of CDC42. Interacts with EPS8. Phosphorylated on tyrosine residues by INSR in response to insulin treatment. In terms of tissue distribution, detected in liver, brain, olfactory bulb, brain cortex, caudate putamen, hypothalamus and cerebellum.

It is found in the cytoplasm. It localises to the membrane. The protein localises to the cell projection. Its subcellular location is the filopodium. The protein resides in the ruffle. It is found in the cytoskeleton. In terms of biological role, adapter protein that links membrane-bound small G-proteins to cytoplasmic effector proteins. Necessary for CDC42-mediated reorganization of the actin cytoskeleton and for RAC1-mediated membrane ruffling. Involved in the regulation of the actin cytoskeleton by WASF family members and the Arp2/3 complex. Plays a role in neurite growth. Acts syngeristically with ENAH to promote filipodia formation. Plays a role in the reorganization of the actin cytoskeleton in response to bacterial infection. Participates in actin bundling when associated with EPS8, promoting filopodial protrusions. The chain is BAR/IMD domain-containing adapter protein 2 (Baiap2) from Mus musculus (Mouse).